The sequence spans 364 residues: 3-methyl-2-oxobutanoate hydroxymethyltransferase 1, mitochondrial (364 aa).

Residues 1-59 constitute a mitochondrion transit peptide; the sequence is MMMMMRRAFRHLARQQRRPLSHVPESAVYGGPRPQDVGAAAGAGAGAGATRRVTVTTLR. Aspartate 94 and aspartate 133 together coordinate Mg(2+). Residues 94 to 95, aspartate 133, and lysine 163 each bind 3-methyl-2-oxobutanoate; that span reads DS. Glutamate 165 contacts Mg(2+). The active-site Proton acceptor is glutamate 233.

Belongs to the PanB family. Requires Mg(2+) as cofactor.

Its subcellular location is the mitochondrion. The catalysed reaction is 3-methyl-2-oxobutanoate + (6R)-5,10-methylene-5,6,7,8-tetrahydrofolate + H2O = 2-dehydropantoate + (6S)-5,6,7,8-tetrahydrofolate. It participates in cofactor biosynthesis; (R)-pantothenate biosynthesis; (R)-pantoate from 3-methyl-2-oxobutanoate: step 1/2. In terms of biological role, catalyzes the reversible reaction in which hydroxymethyl group from 5,10-methylenetetrahydrofolate is transferred onto alpha-ketoisovalerate to form ketopantoate. The chain is 3-methyl-2-oxobutanoate hydroxymethyltransferase 1, mitochondrial (KPHMT1) from Oryza sativa subsp. japonica (Rice).